The chain runs to 256 residues: Biosynthetic peptidoglycan transglycosylase (256 aa).

Residues 26 to 48 (VARWLAYVGGVFAGAWLATQLYY) form a helical membrane-spanning segment.

This sequence belongs to the glycosyltransferase 51 family.

It localises to the cell inner membrane. The enzyme catalyses [GlcNAc-(1-&gt;4)-Mur2Ac(oyl-L-Ala-gamma-D-Glu-L-Lys-D-Ala-D-Ala)](n)-di-trans,octa-cis-undecaprenyl diphosphate + beta-D-GlcNAc-(1-&gt;4)-Mur2Ac(oyl-L-Ala-gamma-D-Glu-L-Lys-D-Ala-D-Ala)-di-trans,octa-cis-undecaprenyl diphosphate = [GlcNAc-(1-&gt;4)-Mur2Ac(oyl-L-Ala-gamma-D-Glu-L-Lys-D-Ala-D-Ala)](n+1)-di-trans,octa-cis-undecaprenyl diphosphate + di-trans,octa-cis-undecaprenyl diphosphate + H(+). The protein operates within cell wall biogenesis; peptidoglycan biosynthesis. Its function is as follows. Peptidoglycan polymerase that catalyzes glycan chain elongation from lipid-linked precursors. This chain is Biosynthetic peptidoglycan transglycosylase, found in Burkholderia pseudomallei (strain K96243).